The sequence spans 122 residues: UPF0102 protein xcc-b100_3645 (122 aa).

This sequence belongs to the UPF0102 family.

This is UPF0102 protein xcc-b100_3645 from Xanthomonas campestris pv. campestris (strain B100).